A 219-amino-acid polypeptide reads, in one-letter code: Cysteine dioxygenase (219 aa).

Residues H106, H108, and H166 each contribute to the Fe cation site. A cross-link (3'-(S-cysteinyl)-tyrosine (Cys-Tyr)) is located at residues 113-183 (CVMKILHGSL…NDFAISLHLY (71 aa)).

This sequence belongs to the cysteine dioxygenase family. Requires Fe cation as cofactor. The thioether cross-link between Cys-113 and Tyr-183 plays a structural role through stabilizing the Fe(2+) ion, and prevents the production of highly damaging free hydroxyl radicals by holding the oxygen radical via hydroxyl hydrogen.

It carries out the reaction L-cysteine + O2 = 3-sulfino-L-alanine + H(+). Cysteine dioxygenase involved in sulfite formation from cysteine. Required for keratin degradation and plays an important role in filamentous growth and virulence. The protein is Cysteine dioxygenase of Arthroderma benhamiae (Trichophyton mentagrophytes).